Here is a 462-residue protein sequence, read N- to C-terminus: Bifunctional protein GlmU (462 aa).

The interval 1-235 (MSYINFSAII…TFEIMGVNSK (235 aa)) is pyrophosphorylase. Residues 11–14 (LAAG), Lys25, Gln80, 85–86 (GT), 107–109 (YGD), Gly144, Glu159, and Asn233 contribute to the UDP-N-acetyl-alpha-D-glucosamine site. Asp109 provides a ligand contact to Mg(2+). A Mg(2+)-binding site is contributed by Asn233. The linker stretch occupies residues 236-256 (SDFVDLDKQYQQRKVQCLLSS). Positions 257-462 (GLMIIDPNRF…LNWKRLKNKK (206 aa)) are N-acetyltransferase. UDP-N-acetyl-alpha-D-glucosamine is bound by residues Arg339 and Lys357. His369 (proton acceptor) is an active-site residue. Residues Tyr372 and Asn383 each contribute to the UDP-N-acetyl-alpha-D-glucosamine site. Residues Ala386, 392 to 393 (NY), Ala429, and Arg446 contribute to the acetyl-CoA site.

The protein in the N-terminal section; belongs to the N-acetylglucosamine-1-phosphate uridyltransferase family. This sequence in the C-terminal section; belongs to the transferase hexapeptide repeat family. In terms of assembly, homotrimer. Mg(2+) is required as a cofactor.

It localises to the cytoplasm. The enzyme catalyses alpha-D-glucosamine 1-phosphate + acetyl-CoA = N-acetyl-alpha-D-glucosamine 1-phosphate + CoA + H(+). The catalysed reaction is N-acetyl-alpha-D-glucosamine 1-phosphate + UTP + H(+) = UDP-N-acetyl-alpha-D-glucosamine + diphosphate. The protein operates within nucleotide-sugar biosynthesis; UDP-N-acetyl-alpha-D-glucosamine biosynthesis; N-acetyl-alpha-D-glucosamine 1-phosphate from alpha-D-glucosamine 6-phosphate (route II): step 2/2. It functions in the pathway nucleotide-sugar biosynthesis; UDP-N-acetyl-alpha-D-glucosamine biosynthesis; UDP-N-acetyl-alpha-D-glucosamine from N-acetyl-alpha-D-glucosamine 1-phosphate: step 1/1. It participates in bacterial outer membrane biogenesis; LPS lipid A biosynthesis. In terms of biological role, catalyzes the last two sequential reactions in the de novo biosynthetic pathway for UDP-N-acetylglucosamine (UDP-GlcNAc). The C-terminal domain catalyzes the transfer of acetyl group from acetyl coenzyme A to glucosamine-1-phosphate (GlcN-1-P) to produce N-acetylglucosamine-1-phosphate (GlcNAc-1-P), which is converted into UDP-GlcNAc by the transfer of uridine 5-monophosphate (from uridine 5-triphosphate), a reaction catalyzed by the N-terminal domain. This is Bifunctional protein GlmU from Blochmanniella pennsylvanica (strain BPEN).